The sequence spans 458 residues: tRNA modification GTPase MnmE (458 aa).

3 residues coordinate (6S)-5-formyl-5,6,7,8-tetrahydrofolate: arginine 32, glutamate 89, and lysine 128. Residues 224–381 (GVRVVLAGRP…LCQRLKECAG (158 aa)) enclose the TrmE-type G domain. Asparagine 234 provides a ligand contact to K(+). Residues 234 to 239 (NVGKSS), 253 to 259 (TDVPGTT), and 278 to 281 (DTAG) each bind GTP. Residue serine 238 participates in Mg(2+) binding. Positions 253, 255, and 258 each coordinate K(+). Threonine 259 provides a ligand contact to Mg(2+). Residue lysine 458 participates in (6S)-5-formyl-5,6,7,8-tetrahydrofolate binding.

It belongs to the TRAFAC class TrmE-Era-EngA-EngB-Septin-like GTPase superfamily. TrmE GTPase family. In terms of assembly, homodimer. Heterotetramer of two MnmE and two MnmG subunits. It depends on K(+) as a cofactor.

It localises to the cytoplasm. Exhibits a very high intrinsic GTPase hydrolysis rate. Involved in the addition of a carboxymethylaminomethyl (cmnm) group at the wobble position (U34) of certain tRNAs, forming tRNA-cmnm(5)s(2)U34. The protein is tRNA modification GTPase MnmE of Nitrosococcus oceani (strain ATCC 19707 / BCRC 17464 / JCM 30415 / NCIMB 11848 / C-107).